The following is a 460-amino-acid chain: Cysteine--tRNA ligase (460 aa).

C28 provides a ligand contact to Zn(2+). A 'HIGH' region motif is present at residues 30 to 40 (VTIYDLCHIGH). Zn(2+) contacts are provided by C209, H234, and E238. Residues 266–270 (KMSKS) carry the 'KMSKS' region motif. K269 contacts ATP.

It belongs to the class-I aminoacyl-tRNA synthetase family. Monomer. The cofactor is Zn(2+).

The protein resides in the cytoplasm. The catalysed reaction is tRNA(Cys) + L-cysteine + ATP = L-cysteinyl-tRNA(Cys) + AMP + diphosphate. The protein is Cysteine--tRNA ligase of Vibrio parahaemolyticus serotype O3:K6 (strain RIMD 2210633).